The primary structure comprises 338 residues: tRNA N6-adenosine threonylcarbamoyltransferase (338 aa).

Fe cation contacts are provided by H111 and H115. Substrate is bound by residues 134–138, D167, G180, and N272; that span reads LVSGG. Fe cation is bound at residue D300.

This sequence belongs to the KAE1 / TsaD family. Requires Fe(2+) as cofactor.

Its subcellular location is the cytoplasm. It carries out the reaction L-threonylcarbamoyladenylate + adenosine(37) in tRNA = N(6)-L-threonylcarbamoyladenosine(37) in tRNA + AMP + H(+). Functionally, required for the formation of a threonylcarbamoyl group on adenosine at position 37 (t(6)A37) in tRNAs that read codons beginning with adenine. Is involved in the transfer of the threonylcarbamoyl moiety of threonylcarbamoyl-AMP (TC-AMP) to the N6 group of A37, together with TsaE and TsaB. TsaD likely plays a direct catalytic role in this reaction. The polypeptide is tRNA N6-adenosine threonylcarbamoyltransferase (Shewanella baltica (strain OS223)).